The primary structure comprises 264 residues: Hemin import ATP-binding protein HmuV (264 aa).

The ABC transporter domain occupies 10–246; the sequence is LQAQNLSYSI…HTLRKWYQAD (237 aa). 42 to 49 is an ATP binding site; the sequence is GPNGAGKS.

The protein belongs to the ABC transporter superfamily. Heme (hemin) importer (TC 3.A.1.14.5) family. The complex is composed of two ATP-binding proteins (HmuV), two transmembrane proteins (HmuU) and a solute-binding protein (HmuT).

It is found in the cell inner membrane. Its function is as follows. Part of the ABC transporter complex HmuTUV involved in hemin import. Responsible for energy coupling to the transport system. This is Hemin import ATP-binding protein HmuV from Photorhabdus laumondii subsp. laumondii (strain DSM 15139 / CIP 105565 / TT01) (Photorhabdus luminescens subsp. laumondii).